A 171-amino-acid chain; its full sequence is MLHTRTIALLLVGLVVLVNAQTFQYSRGWTNGKRSPLSSSSSSPSSSAAMEPLTANQLLASALSSGGLNSLKPSEKALLRRFLRNPCDLRVASLLAAAHPTKELFPLAGNSFDSAESAGAAFVLPPFLMDPDESNGGIGGSNLANGRSMEDELRFKRGTATGFSDHRQKIA.

A signal peptide spans 1–20 (MLHTRTIALLLVGLVVLVNA). Gln-21 bears the Pyrrolidone carboxylic acid mark. An Asparagine amide modification is found at Asn-31. Positions 82 to 171 (FLRNPCDLRV…GFSDHRQKIA (90 aa)) are excised as a propeptide.

Belongs to the corazonin family.

Its subcellular location is the secreted. Its function is as follows. Cardioactive peptide. Corazonin is probably involved in the physiological regulation of the heart beat. In Anopheles gambiae (African malaria mosquito), this protein is Pro-corazonin.